The chain runs to 194 residues: Histone H1.0 (194 aa).

Met1 is modified (N-acetylmethionine). Residues 1 to 11 (MTENSTSAPAA) are compositionally biased toward low complexity. A disordered region spans residues 1–29 (MTENSTSAPAAKPKRAKASKKSTDHPKYS). Thr2 is modified (N-acetylthreonine; in Histone H1.0, N-terminally processed). The region spanning 24 to 97 (DHPKYSDMVV…GASGSFRLAK (74 aa)) is the H15 domain. Arg42 carries the post-translational modification Citrulline. The disordered stretch occupies residues 84–194 (TKGVGASGSF…SSAKRAGKKK (111 aa)). Position 104 is an ADP-ribosylserine (Ser104). Residues 105-194 (VAFKKTKKEI…SSAKRAGKKK (90 aa)) show a composition bias toward basic residues.

The protein belongs to the histone H1/H5 family. In terms of processing, ADP-ribosylated on Ser-104 in response to DNA damage.

It localises to the nucleus. It is found in the chromosome. Its function is as follows. Histones H1 are necessary for the condensation of nucleosome chains into higher-order structures. The histones H1.0 are found in cells that are in terminal stages of differentiation or that have low rates of cell division. In Pongo abelii (Sumatran orangutan), this protein is Histone H1.0 (H1-0).